A 470-amino-acid polypeptide reads, in one-letter code: MDNLKKKYQHHLSLESASREYGPFQMLGRIQSDSDIKMLSFAGGEPNPSKFPIHKLSVSFPEVNSWEKDTNKDATVSYELSNNANEGSLDLLGALQYGQCQGIPELVKFIKDHVGQIHMPQYKDWDIKITNGNTIGLEYCLRLLVNRGDCILIEKYTYPAAITAMRPLGVKFIPIDMDENGMLPESFEKVMETWDSSLGARPHVLYTIPTGQNPTGSTLTLERRKKFLTLAKKYDIIIVEDEPYYFLQMEKYDANWKPDKQAFNISSFKKKLIPSLLHLDTDGRVLRVDSFSKLIVPGLRLGWITGNSLFIDRITRYAEVCTESPSGVSQVVLYAILNRWGQNGFLEWLQDLQNSYTMRRNALLLAADKHLPKSVCKYHSPKAGLFLWVELDKNRLICSNMDKSISEIEMEIFVELVNNGVKPVCGQLFMGEPNSADKIFFRFAYSLADLSTFEAGLERFTSTIQKYFQL.

It belongs to the class-I pyridoxal-phosphate-dependent aminotransferase family. Pyridoxal 5'-phosphate is required as a cofactor.

Its subcellular location is the cytoplasm. It carries out the reaction an aromatic L-alpha-amino acid + 2-oxoglutarate = an aromatic oxo-acid + L-glutamate. Functionally, has aromatic amino acid transaminase activity. This Schizosaccharomyces pombe (strain 972 / ATCC 24843) (Fission yeast) protein is Aromatic amino acid aminotransferase C569.07.